The following is a 90-amino-acid chain: Small ribosomal subunit protein uS15c (90 aa).

Belongs to the universal ribosomal protein uS15 family. Part of the 30S ribosomal subunit.

Its subcellular location is the plastid. The protein resides in the chloroplast. The protein is Small ribosomal subunit protein uS15c (rps15) of Liriodendron tulipifera (Tuliptree).